A 699-amino-acid polypeptide reads, in one-letter code: Putative inactive kinesin-like protein KIN-7B (699 aa).

The 170-residue stretch at 1-170 folds into the Kinesin motor domain; sequence MRAIQKKSLC…LLFGSCAKEV (170 aa). Positions 179–247 form a coiled coil; the sequence is VMSDKALVKH…QSRLQDLLQS (69 aa). A disordered region spans residues 249–345; it reads GDHDLNRQVQ…VNSRHSRPSG (97 aa). Positions 264-275 are enriched in low complexity; it reads RSPPSVGMPPSV. Positions 276–298 are enriched in basic and acidic residues; the sequence is SRDDSSQVSHDDSDLYKEVRCIE. Positions 313–338 are enriched in polar residues; that stretch reads GESSSPQDSNMNSGLHGNDSNASVNS.

Belongs to the TRAFAC class myosin-kinesin ATPase superfamily. Kinesin family. KIN-7 subfamily.

In Oryza sativa subsp. japonica (Rice), this protein is Putative inactive kinesin-like protein KIN-7B.